A 156-amino-acid polypeptide reads, in one-letter code: MPRKGPVPKRQILPDPVYGSQLATKFMNRLMYDGKKSVSENIFYQALEFLGDKTQEDPIKAFEKAVENVKPHVEVKSRRVGGATYQVPVEVRPDRQVSLAIRWLINFARSRGEKGMVARLSGEFLDAYNKRGGAVKKKEDTHRMAEANKAFAHYRW.

This sequence belongs to the universal ribosomal protein uS7 family. In terms of assembly, part of the 30S ribosomal subunit. Contacts proteins S9 and S11.

In terms of biological role, one of the primary rRNA binding proteins, it binds directly to 16S rRNA where it nucleates assembly of the head domain of the 30S subunit. Is located at the subunit interface close to the decoding center, probably blocks exit of the E-site tRNA. This is Small ribosomal subunit protein uS7 from Maridesulfovibrio salexigens (strain ATCC 14822 / DSM 2638 / NCIMB 8403 / VKM B-1763) (Desulfovibrio salexigens).